The sequence spans 66 residues: Conotoxin TsMEKL-03 (66 aa).

An N-terminal signal peptide occupies residues 1 to 9 (VILLMSTQA). Residues 10–38 (LIQSGVEKRSNKIKALSKRKTTAESWWEG) constitute a propeptide that is removed on maturation. 3 disulfides stabilise this stretch: Cys-40-Cys-54, Cys-47-Cys-58, and Cys-53-Cys-63.

It belongs to the conotoxin O2 superfamily. In terms of tissue distribution, expressed by the venom duct.

Its subcellular location is the secreted. The polypeptide is Conotoxin TsMEKL-03 (Conus tessulatus (Tessellate cone)).